The primary structure comprises 965 residues: Serine/threonine-protein kinase tousled-like 1 (965 aa).

Disordered stretches follow at residues 1–22 (MSML…GGER), 35–72 (PQNK…ATGD), 95–120 (QNSS…TRSS), 172–292 (NHQQ…KQER), 320–402 (QNQG…QSGR), and 538–576 (RKPL…DDAI). Gly residues predominate over residues 10–21 (VAGGGSSSGGGE). The segment covering 42-52 (TVQSSGSSSNH) has biased composition (polar residues). Over residues 172 to 231 (NHQQQMQQMHYHQQQQQYQQQQAQHHQMYAPQIQQQQQQPQQQSQQQSAQQPQQSSAALQ) the composition is skewed to low complexity. 2 stretches are compositionally biased toward polar residues: residues 233-244 (VNESSNLSSAGS) and 320-341 (QNQG…SYDS). Positions 342 to 355 (QQQQPQMNQHEMQN) are enriched in low complexity. Residues 365–381 (LGVNNRGTPTPTQQQHY) are compositionally biased toward polar residues. A compositionally biased stretch (low complexity) spans 382 to 401 (SSDSNSNSNQSPPGQGNQSG). The span at 552–572 (AVNSQNDSNGMQPSTSSNTNG) shows a compositional bias: polar residues. Ser-634 carries the post-translational modification Phosphoserine. The 278-residue stretch at 651–928 (YLMLNLLGKG…VFELAKHELF (278 aa)) folds into the Protein kinase domain. Residues 657 to 665 (LGKGGFSEV) and Lys-680 each bind ATP. The Proton acceptor role is filled by Asp-781.

This sequence belongs to the protein kinase superfamily. Ser/Thr protein kinase family. Interacts with air-2. In terms of processing, autophosphorylates in vitro. Phosphorylation on Ser-634 by air-2 enhances catalytic activity.

The protein resides in the nucleus. It catalyses the reaction L-seryl-[protein] + ATP = O-phospho-L-seryl-[protein] + ADP + H(+). The catalysed reaction is L-threonyl-[protein] + ATP = O-phospho-L-threonyl-[protein] + ADP + H(+). Essential for appropriate transcription during embryonic development. May act during transcription elongation to activate the RNA polymerase II large subunit (ama-1) by phosphorylating the Ser-2 residues of the C-terminal domain 7-residue repeats. Does not phosphorylate histone H3. This Caenorhabditis elegans protein is Serine/threonine-protein kinase tousled-like 1 (tlk-1).